We begin with the raw amino-acid sequence, 190 residues long: Ribosome maturation factor RimM (190 aa).

One can recognise a PRC barrel domain in the interval 102-190 (EDEYYWIDLV…RIDSDWPLED (89 aa)).

This sequence belongs to the RimM family. Binds ribosomal protein uS19.

It is found in the cytoplasm. An accessory protein needed during the final step in the assembly of 30S ribosomal subunit, possibly for assembly of the head region. Essential for efficient processing of 16S rRNA. May be needed both before and after RbfA during the maturation of 16S rRNA. It has affinity for free ribosomal 30S subunits but not for 70S ribosomes. This Bordetella avium (strain 197N) protein is Ribosome maturation factor RimM.